Reading from the N-terminus, the 117-residue chain is Glutamine-rich protein (117 aa).

Positions 27–72 are enriched in low complexity; it reads RQQFQQQQQQQRQPQLQQQQQQQGIQQQPQGLQHQQQQFGLTQQHG. The interval 27–88 is disordered; that stretch reads RQQFQQQQQQ…IVQPNPASQN (62 aa). The span at 75-87 shows a compositional bias: polar residues; the sequence is RRQNIVQPNPASQ.

Component of the acid-soluble and acid-insoluble organic matrix of calcified shell layers (at protein level).

The protein resides in the secreted. This chain is Glutamine-rich protein, found in Haliotis asinina (Donkey's ear abalone).